The sequence spans 329 residues: GTP 3',8-cyclase (329 aa).

A Radical SAM core domain is found at 8–234 (AFARKFYYLR…QLRQRSDGPA (227 aa)). Position 17 (Arg-17) interacts with GTP. Residues Cys-24 and Cys-28 each coordinate [4Fe-4S] cluster. Tyr-30 serves as a coordination point for S-adenosyl-L-methionine. [4Fe-4S] cluster is bound at residue Cys-31. Residue Arg-68 participates in GTP binding. Gly-72 contacts S-adenosyl-L-methionine. Thr-99 is a binding site for GTP. Residue Ser-123 coordinates S-adenosyl-L-methionine. Lys-160 provides a ligand contact to GTP. Residue Met-194 participates in S-adenosyl-L-methionine binding. 2 residues coordinate [4Fe-4S] cluster: Cys-257 and Cys-260. 262 to 264 (RLR) provides a ligand contact to GTP. A [4Fe-4S] cluster-binding site is contributed by Cys-274.

Belongs to the radical SAM superfamily. MoaA family. In terms of assembly, monomer and homodimer. Requires [4Fe-4S] cluster as cofactor.

The catalysed reaction is GTP + AH2 + S-adenosyl-L-methionine = (8S)-3',8-cyclo-7,8-dihydroguanosine 5'-triphosphate + 5'-deoxyadenosine + L-methionine + A + H(+). The protein operates within cofactor biosynthesis; molybdopterin biosynthesis. In terms of biological role, catalyzes the cyclization of GTP to (8S)-3',8-cyclo-7,8-dihydroguanosine 5'-triphosphate. In Escherichia coli O7:K1 (strain IAI39 / ExPEC), this protein is GTP 3',8-cyclase.